Reading from the N-terminus, the 700-residue chain is MPRQTPIERYRNIGISAHIDAGKTTTTERILFYTGVNHKIGEVHDGAATMDWMEQEQERGITITSAATHCMWRGMGGNYPEHRINIIDTPGHVDFTIEVERSMRVLDGACMVYDSVGGVQPQSETVWRQANKYKVPRIAFVNKMDRVGADFFRVERQMRERLKGNPVPVQIPVGAEDHFRGVVDLVKMKAIVWDDASQGVKFEYIDIPEELRATAQEWHDKMVEAAAEADEALLEKYLGGEALTEAEIKGALRRRTIAGEIVPMLCGSAFKNKGVQAMLDAVVDYLPSPIDIPSIQGHGEKDEPLERHANDDEPFSALAFKIMTDPFVGQLIFFRVYSGSVYSGDTVYNPVKEKKERLGRILQMHANQRVEIKDVHAGDIAAAVGLKEATTGDTLCDPDNVIILERMEFPEPVISQAVEPKTKGDQEKMGLALNRLAQEDPSFRVKTDEESGQTIISGMGELHLEILVDRMKREFGVEATVGKPQVAYRETIRKVADDVEGKFIKQSGGRGQYGHAVITLQPNPGKGYEFVDEIKGGVIPREFIPAVDKGIRDTLNAGVLAGYPVVDVKVRLTFGSYHDVDSNENAFRMAGSMAFKDAMRRADPILLEPMMAVEVETPEEYMGNVIGDLSSRRGMVQGTEDIPGGGGKVVHAEVPLAEMFGYSTNLRSLSQGRATYTMEFKHYAEAPRTVSETVISAKRA.

Residues Glu-8–Ile-290 enclose the tr-type G domain. Residues Ala-17–Thr-24, Asp-88–His-92, and Asn-142–Asp-145 each bind GTP.

This sequence belongs to the TRAFAC class translation factor GTPase superfamily. Classic translation factor GTPase family. EF-G/EF-2 subfamily.

It is found in the cytoplasm. Functionally, catalyzes the GTP-dependent ribosomal translocation step during translation elongation. During this step, the ribosome changes from the pre-translocational (PRE) to the post-translocational (POST) state as the newly formed A-site-bound peptidyl-tRNA and P-site-bound deacylated tRNA move to the P and E sites, respectively. Catalyzes the coordinated movement of the two tRNA molecules, the mRNA and conformational changes in the ribosome. The protein is Elongation factor G 2 (fusB) of Ralstonia nicotianae (strain ATCC BAA-1114 / GMI1000) (Ralstonia solanacearum).